Here is a 107-residue protein sequence, read N- to C-terminus: Essential MCU regulator, mitochondrial (107 aa).

A mitochondrion-targeting transit peptide spans 1-47 (MASTAARRLAWVAVRPGALWSGPRGRRGGDVYTVPGSSGLSQVPSRS). Residues 48 to 65 (VIVTRSGAILPKPVKMSF) are Mitochondrial matrix-facing. Residues 66–85 (GLLRVFSIVIPFLYVGTLIS) traverse the membrane as a helical segment. Positions 81–85 (GTLIS) match the GXXXX[G/A/S] motif. Residues 86-107 (KNFAALLEEHDIFVPEDDDDDD) are Mitochondrial intermembrane-facing.

This sequence belongs to the SMDT1/EMRE family. As to quaternary structure, component of the uniplex complex, composed of MCU, EMRE/SMDT1, MICU1 and MICU2 (or MICU3) in a 4:4:1:1 stoichiometry. The number of EMRE/SMDT1 molecules is hovewer variable, ranging from 1 to 4 copies per uniplex complex, leading to uniplex complexes with distinct gatekeeping profiles. Interacts (via its C-terminal poly-Asp tail) with MCUR1; the interaction is direct. Unprocessed form interacts (via transit peptide) with MAIP1. Undergoes proteolytic degradation in neurons: degraded by AFG3L2 and SPG7 before SMDT1/EMRE assembly with the uniporter complex, limiting the availability of SMDT1/EMRE for MCU assembly and promoting efficient assembly of gatekeeper subunits with MCU. In terms of tissue distribution, widely expressed.

The protein resides in the mitochondrion inner membrane. Its function is as follows. Essential regulatory subunit of the mitochondrial calcium uniporter complex (uniplex), a complex that mediates calcium uptake into mitochondria. Required to bridge the calcium-sensing proteins MICU1 with the calcium-conducting subunit MCU. Acts by mediating activation of MCU and retention of MICU1 to the MCU pore, in order to ensure tight regulation of the uniplex complex and appropriate responses to intracellular calcium signaling. In Mus musculus (Mouse), this protein is Essential MCU regulator, mitochondrial.